The sequence spans 100 residues: MIASLALAAAVFAAAPQAQAQTDLLKPVSEPRIAVAILNCLVKNDGYLTACTVQDESPNDLGVGQAALSMVSQVQVDLLGPDGKSRAGSYIQVPVRIRIR.

This is an uncharacterized protein from Caulobacter vibrioides (strain ATCC 19089 / CIP 103742 / CB 15) (Caulobacter crescentus).